We begin with the raw amino-acid sequence, 502 residues long: Lysine--tRNA ligase (502 aa).

The Mg(2+) site is built by Glu411 and Glu418.

It belongs to the class-II aminoacyl-tRNA synthetase family. As to quaternary structure, homodimer. Mg(2+) serves as cofactor.

Its subcellular location is the cytoplasm. The enzyme catalyses tRNA(Lys) + L-lysine + ATP = L-lysyl-tRNA(Lys) + AMP + diphosphate. This Clostridium kluyveri (strain ATCC 8527 / DSM 555 / NBRC 12016 / NCIMB 10680 / K1) protein is Lysine--tRNA ligase.